Consider the following 527-residue polypeptide: Nucleus accumbens-associated protein 1 (527 aa).

The region spanning 30–94 is the BTB domain; sequence CDVSVVVKGH…CYTGRLSMNV (65 aa). Residues 131–153 form a disordered region; sequence QGLHAEEAPSSEPQSPVAQTSGW. Residues 141–152 show a composition bias toward polar residues; it reads SEPQSPVAQTSG. Lys-167 is covalently cross-linked (Glycyl lysine isopeptide (Lys-Gly) (interchain with G-Cter in SUMO1); alternate). A Glycyl lysine isopeptide (Lys-Gly) (interchain with G-Cter in SUMO2); alternate cross-link involves residue Lys-167. Lys-183 participates in a covalent cross-link: Glycyl lysine isopeptide (Lys-Gly) (interchain with G-Cter in SUMO2). Ser-188 is subject to Phosphoserine. Residues 210-292 are disordered; it reads DLAANRPHQP…DEEEDGGEEG (83 aa). Residues 225–251 are compositionally biased toward low complexity; the sequence is APVVAAAQPAVAAGAGQPAGGVAAAGG. Polar residues predominate over residues 255-277; that stretch reads GPSTSERTSPGTSSAYTSDSPGS. At Ser-259 the chain carries Phosphoserine; by PKC. Over residues 281–292 the composition is skewed to acidic residues; sequence EEDEEEDGGEEG. Residues Lys-318, Lys-452, Lys-480, Lys-483, and Lys-498 each participate in a glycyl lysine isopeptide (Lys-Gly) (interchain with G-Cter in SUMO2) cross-link. Residues 374-471 form the BEN domain; that stretch reads GTNVYITRAQ…DMCTNARRVV (98 aa).

In terms of assembly, homooligomer; mediated by the BTB domain. Interacts with HDAC3 and HDAC4. Interacts (via BTB domain) with CUL3, PSMD7 and RCOR1. As to expression, overexpressed in several types of carcinomas including ovarian serous carcinomas. Expression levels positively correlate with tumor recurrence in ovarian serous carcinomas, and intense immunoreactivity in primary ovarian tumors predicts early recurrence. Up-regulated in ovarian carcinomas after chemotherapy, suggesting a role in development of chemotherapy resistance in ovarian cancer.

The protein localises to the nucleus. It localises to the cytoplasm. Its function is as follows. Functions as a transcriptional repressor. Seems to function as a transcriptional corepressor in neuronal cells through recruitment of HDAC3 and HDAC4. Contributes to tumor progression, and tumor cell proliferation and survival. This may be mediated at least in part through repressing transcriptional activity of GADD45GIP1. Required for recruiting the proteasome from the nucleus to the cytoplasm and dendritic spines. The protein is Nucleus accumbens-associated protein 1 (NACC1) of Homo sapiens (Human).